A 125-amino-acid polypeptide reads, in one-letter code: Succinate dehydrogenase hydrophobic membrane anchor subunit (125 aa).

The Cytoplasmic segment spans residues 1–24 (MIYDFKAEIIKSKSSSSSKSGAHH). A helical transmembrane segment spans residues 25–45 (WLLQRVTGVVLALCSFWLIYF). Residues 46–67 (MFTNKNNDINIIMWEFKKPFNI) lie on the Periplasmic side of the membrane. Residues 68–89 (VILLITVTISLYHSVLGMRVVI) traverse the membrane as a helical segment. A heme-binding site is contributed by His-80. Topologically, residues 90-99 (EDYINCHKLR) are cytoplasmic. A ubiquinone is bound at residue Tyr-92. Residues 100-123 (NTLIIIVKLFCILTIVAFIVAIFY) traverse the membrane as a helical segment.

As to quaternary structure, part of an enzyme complex containing four subunits: a flavoprotein, an iron-sulfur protein, plus two membrane-anchoring proteins, SdhC and SdhD. Heme is required as a cofactor.

Its subcellular location is the cell inner membrane. It participates in carbohydrate metabolism; tricarboxylic acid cycle. Membrane-anchoring subunit of succinate dehydrogenase (SDH). This is Succinate dehydrogenase hydrophobic membrane anchor subunit (sdhD) from Rickettsia typhi (strain ATCC VR-144 / Wilmington).